The chain runs to 99 residues: MYHHQQKIRKHWHRTVLFFSVALLIAWNFAVILHQVDLTPEHHTHHHCQLFSGVQHGIAKAQPTLSTPTFTRIQYHDVFQRLVNSEDIRGAARAPPYFA.

This is an uncharacterized protein from Vibrio alginolyticus.